Consider the following 90-residue polypeptide: Small ribosomal subunit protein uS15 (90 aa).

Belongs to the universal ribosomal protein uS15 family. Part of the 30S ribosomal subunit. Forms a bridge to the 50S subunit in the 70S ribosome, contacting the 23S rRNA.

One of the primary rRNA binding proteins, it binds directly to 16S rRNA where it helps nucleate assembly of the platform of the 30S subunit by binding and bridging several RNA helices of the 16S rRNA. Its function is as follows. Forms an intersubunit bridge (bridge B4) with the 23S rRNA of the 50S subunit in the ribosome. In Mycoplasmoides gallisepticum (strain R(low / passage 15 / clone 2)) (Mycoplasma gallisepticum), this protein is Small ribosomal subunit protein uS15.